Consider the following 145-residue polypeptide: MHIYFCGSIRGGRQDVIIYQRIVQTLQKYGEVLTEHVSHSDLSERGEDAVQDGDKFIHDRDMEWLVMSDVIIAEVTQPSLGVGYELGSARGMRKKILCLFRPSSGKSLSAMVRGAVDGSLFQVRDYKEEEVEGILEEYFKGLSKD.

5-hydroxymethyl-dUMP-binding residues include glycine 7, isoleucine 9, arginine 10, glycine 11, serine 79, glycine 81, glutamate 85, and serine 109.

It belongs to the 2'-deoxynucleoside 5'-phosphate N-hydrolase 1 family. Monomer and homodimer.

Its subcellular location is the cytoplasm. The protein resides in the nucleus. The enzyme catalyses 5-hydroxymethyl-dUMP + H2O = 5-hydroxymethyluracil + 2-deoxy-D-ribose 5-phosphate. Its function is as follows. Part of a nucleotide salvage pathway that eliminates epigenetically modified 5-hydroxymethyl-dCMP (hmdCMP) in a two-step process entailing deamination to cytotoxic 5-hydroxymethyl-dUMP (hmdUMP), followed by its hydrolysis into 5-hydroxymethyluracil (hmU) and 2-deoxy-D-ribose 5-phosphate (deoxyribosephosphate). Catalyzes the second step in that pathway, the hydrolysis of the N-glycosidic bond in hmdUMP, degrading this cytotoxic nucleotide to avoid its genomic integration. The polypeptide is 5-hydroxymethyl-dUMP N-hydrolase (Esox lucius (Northern pike)).